Consider the following 175-residue polypeptide: Bifunctional protein PyrR (175 aa).

Residues 40-41, Arg-85, 102-110, Arg-135, and Val-159 each bind substrate; these read TR and DDVLYTGRT. The PRPP-binding motif lies at 98 to 110; sequence VVIIDDVLYTGRT.

It belongs to the purine/pyrimidine phosphoribosyltransferase family. PyrR subfamily. As to quaternary structure, homodimer and homohexamer; in equilibrium.

The enzyme catalyses UMP + diphosphate = 5-phospho-alpha-D-ribose 1-diphosphate + uracil. In terms of biological role, regulates transcriptional attenuation of the pyrimidine nucleotide (pyr) operon by binding in a uridine-dependent manner to specific sites on pyr mRNA. This disrupts an antiterminator hairpin in the RNA and favors formation of a downstream transcription terminator, leading to a reduced expression of downstream genes. Also displays a weak uracil phosphoribosyltransferase activity which is not physiologically significant. The sequence is that of Bifunctional protein PyrR from Staphylococcus epidermidis (strain ATCC 35984 / DSM 28319 / BCRC 17069 / CCUG 31568 / BM 3577 / RP62A).